The sequence spans 530 residues: Anthranilate synthase component 1, pyocyanine specific (530 aa).

331–332 (GT) serves as a coordination point for substrate. E364 contributes to the Mg(2+) binding site. Substrate contacts are provided by residues Y452, R472, 486-488 (GAG), and G488. E501 provides a ligand contact to Mg(2+).

The protein belongs to the anthranilate synthase component I family. Heterotetramer consisting of two non-identical subunits: a beta subunit (PhnB) and a large alpha subunit (PhnA). Mg(2+) is required as a cofactor.

It catalyses the reaction chorismate + L-glutamine = anthranilate + pyruvate + L-glutamate + H(+). Its pathway is secondary metabolite biosynthesis; pyocyanine biosynthesis. Part of a heterotetrameric complex that catalyzes the two-step biosynthesis of anthranilate, a precursor for Pseudomonas quinolone signal (2-heptyl-3-hydroxy-4-quinolone; PQS) production which is required to induce the genes for the biosynthesis of the virulence factor pyocyanine (PCN), a characteristic blue-green phenazine pigment produced by P.aeruginosa. In the first step, the glutamine-binding beta subunit (PhnB) of anthranilate synthase (AS) provides the glutamine amidotransferase activity which generates ammonia as a substrate that, along with chorismate, is used in the second step, catalyzed by the large alpha subunit of AS (PhnA) to produce anthranilate. This is Anthranilate synthase component 1, pyocyanine specific from Pseudomonas aeruginosa (strain ATCC 15692 / DSM 22644 / CIP 104116 / JCM 14847 / LMG 12228 / 1C / PRS 101 / PAO1).